The primary structure comprises 255 residues: tRNA (guanine-N(1)-)-methyltransferase (255 aa).

Residues glycine 112 and 131–136 (LGDYVL) each bind S-adenosyl-L-methionine.

This sequence belongs to the RNA methyltransferase TrmD family. Homodimer.

It localises to the cytoplasm. It catalyses the reaction guanosine(37) in tRNA + S-adenosyl-L-methionine = N(1)-methylguanosine(37) in tRNA + S-adenosyl-L-homocysteine + H(+). Its function is as follows. Specifically methylates guanosine-37 in various tRNAs. The protein is tRNA (guanine-N(1)-)-methyltransferase of Lacticaseibacillus paracasei (strain ATCC 334 / BCRC 17002 / CCUG 31169 / CIP 107868 / KCTC 3260 / NRRL B-441) (Lactobacillus paracasei).